We begin with the raw amino-acid sequence, 244 residues long: Phosphoadenosine 5'-phosphosulfate reductase (244 aa).

Cys239 (nucleophile; cysteine thiosulfonate intermediate) is an active-site residue.

Belongs to the PAPS reductase family. CysH subfamily.

The protein localises to the cytoplasm. It catalyses the reaction [thioredoxin]-disulfide + sulfite + adenosine 3',5'-bisphosphate + 2 H(+) = [thioredoxin]-dithiol + 3'-phosphoadenylyl sulfate. Its pathway is sulfur metabolism; hydrogen sulfide biosynthesis; sulfite from sulfate: step 3/3. Catalyzes the formation of sulfite from phosphoadenosine 5'-phosphosulfate (PAPS) using thioredoxin as an electron donor. The sequence is that of Phosphoadenosine 5'-phosphosulfate reductase from Serratia proteamaculans (strain 568).